The primary structure comprises 428 residues: tRNA(Ile)-lysidine synthase (428 aa).

28 to 33 contacts ATP; sequence SGGVDS.

It belongs to the tRNA(Ile)-lysidine synthase family.

The protein resides in the cytoplasm. It catalyses the reaction cytidine(34) in tRNA(Ile2) + L-lysine + ATP = lysidine(34) in tRNA(Ile2) + AMP + diphosphate + H(+). In terms of biological role, ligates lysine onto the cytidine present at position 34 of the AUA codon-specific tRNA(Ile) that contains the anticodon CAU, in an ATP-dependent manner. Cytidine is converted to lysidine, thus changing the amino acid specificity of the tRNA from methionine to isoleucine. The polypeptide is tRNA(Ile)-lysidine synthase (Streptococcus pyogenes serotype M18 (strain MGAS8232)).